A 514-amino-acid polypeptide reads, in one-letter code: JmjC domain-containing histone demethylation protein 1 (514 aa).

A PHD-type zinc finger spans residues 4-62; that stretch reads IDTCPICVESPLEDSTTFNNIAWLQCDICNQWFHASCLKIPKIEVNNLHSYHCEGCSKS. One can recognise a JmjC domain in the interval 220–384; that stretch reads SDVDSFGKSF…MHLRIYEIEK (165 aa). Residue T267 participates in substrate binding. H270 and D272 together coordinate Fe cation. K287 serves as a coordination point for substrate. Fe cation is bound at residue H352. The span at 432-454 shows a compositional bias: basic and acidic residues; sequence KSEAHSRGEVHTKTETHAVKDEP. Positions 432 to 456 are disordered; it reads KSEAHSRGEVHTKTETHAVKDEPQP.

This sequence belongs to the JHDM1 histone demethylase family. Requires Fe(2+) as cofactor.

The protein localises to the nucleus. It carries out the reaction N(6),N(6)-dimethyl-L-lysyl(36)-[histone H3] + 2 2-oxoglutarate + 2 O2 = L-lysyl(36)-[histone H3] + 2 formaldehyde + 2 succinate + 2 CO2. In terms of biological role, histone demethylase that specifically demethylates 'Lys-36' of histone H3, thereby playing a central role in histone code. In Debaryomyces hansenii (strain ATCC 36239 / CBS 767 / BCRC 21394 / JCM 1990 / NBRC 0083 / IGC 2968) (Yeast), this protein is JmjC domain-containing histone demethylation protein 1 (JHD1).